A 264-amino-acid polypeptide reads, in one-letter code: NADH-quinone oxidoreductase subunit I 2 (264 aa).

4Fe-4S ferredoxin-type domains lie at 57–86 (GFLE…ISLE) and 98–127 (TQFD…HTRE). C66, C69, C72, C76, C107, C110, C113, and C117 together coordinate [4Fe-4S] cluster. The disordered stretch occupies residues 183–264 (APQFLPPEPP…AAPAANPESK (82 aa)). The segment covering 197–264 (AKPAAKAAPA…AAPAANPESK (68 aa)) has biased composition (low complexity).

The protein belongs to the complex I 23 kDa subunit family. As to quaternary structure, NDH-1 is composed of 14 different subunits. Subunits NuoA, H, J, K, L, M, N constitute the membrane sector of the complex. [4Fe-4S] cluster serves as cofactor.

Its subcellular location is the cell inner membrane. The catalysed reaction is a quinone + NADH + 5 H(+)(in) = a quinol + NAD(+) + 4 H(+)(out). In terms of biological role, NDH-1 shuttles electrons from NADH, via FMN and iron-sulfur (Fe-S) centers, to quinones in the respiratory chain. The immediate electron acceptor for the enzyme in this species is believed to be ubiquinone. Couples the redox reaction to proton translocation (for every two electrons transferred, four hydrogen ions are translocated across the cytoplasmic membrane), and thus conserves the redox energy in a proton gradient. The polypeptide is NADH-quinone oxidoreductase subunit I 2 (Anaeromyxobacter dehalogenans (strain 2CP-C)).